We begin with the raw amino-acid sequence, 858 residues long: Transcription factor pytR (858 aa).

Residues 1–35 (MAHFSRVASDPSLAPQPSAPSGLDSSTTSSSSTGL) form a disordered region. A DNA-binding region (zn(2)-C6 fungal-type) is located at residues 39-65 (CTFCRARKIRCSSGPICSACRERNINC). Residues 72 to 99 (RKGRPRRRGTNTSNAQAKKGDQENPTLG) are disordered.

Its subcellular location is the nucleus. Functionally, transcription factor that regulates the expression of the gene cluster that mediates the biosynthesis of Pyranterreones, a family of antioxidative compounds. The sequence is that of Transcription factor pytR from Aspergillus terreus (strain NIH 2624 / FGSC A1156).